A 76-amino-acid polypeptide reads, in one-letter code: RNA-binding protein KhpA (76 aa).

Positions 29 to 76 (SLTYKLSVSKEDMGRVIGKQGRIAKAIRTLVYAVGSKNDKKIRLEIIE) constitute a KH domain.

It belongs to the KhpA RNA-binding protein family. In terms of assembly, forms a complex with KhpB.

The protein localises to the cytoplasm. In terms of biological role, a probable RNA chaperone. Forms a complex with KhpB which binds to cellular RNA and controls its expression. Plays a role in peptidoglycan (PG) homeostasis and cell length regulation. This Listeria innocua serovar 6a (strain ATCC BAA-680 / CLIP 11262) protein is RNA-binding protein KhpA.